We begin with the raw amino-acid sequence, 267 residues long: 5'-nucleotidase SurE (267 aa).

Residues D9, D10, S40, and N97 each coordinate a divalent metal cation.

Belongs to the SurE nucleotidase family. It depends on a divalent metal cation as a cofactor.

The protein resides in the cytoplasm. The catalysed reaction is a ribonucleoside 5'-phosphate + H2O = a ribonucleoside + phosphate. In terms of biological role, nucleotidase that shows phosphatase activity on nucleoside 5'-monophosphates. The polypeptide is 5'-nucleotidase SurE (Helicobacter pylori (strain J99 / ATCC 700824) (Campylobacter pylori J99)).